The primary structure comprises 300 residues: Probable low-salt glycan biosynthesis reductase Agl14 (300 aa).

NADH is bound by residues 10 to 12 (GLL), 46 to 47 (DI), and 70 to 72 (AYT). NADPH is bound by residues 11-12 (LL), 46-47 (DI), 70-72 (AYT), Y109, Y135, and K139. NADH is bound by residues Y135 and K139. Y135 functions as the Proton donor/acceptor in the catalytic mechanism.

The protein belongs to the dTDP-4-dehydrorhamnose reductase family.

Its pathway is protein modification; protein glycosylation. The protein operates within cell surface structure biogenesis; S-layer biogenesis. In terms of biological role, reductase involved in N-glycan biosynthetic pathway that takes place under low-salt conditions (1.75 M instead of 3.4 M). Participates in the formation of the tetrasaccharide present at 'Asn-532' of S-layer glycoprotein Csg, consisting of a sulfated hexose, 2 hexoses and rhamnose. Involved in the addition of final rhamnose (sugar 4) of the tetrasaccharide on the dolichol phosphate carrier. The protein is Probable low-salt glycan biosynthesis reductase Agl14 (agl14) of Haloferax volcanii (strain ATCC 29605 / DSM 3757 / JCM 8879 / NBRC 14742 / NCIMB 2012 / VKM B-1768 / DS2) (Halobacterium volcanii).